A 227-amino-acid chain; its full sequence is Ribose-5-phosphate isomerase A (227 aa).

Substrate contacts are provided by residues 26–29 (TGST), 82–85 (DGAD), and 95–98 (KGGG). Glu104 acts as the Proton acceptor in catalysis. Residue Lys122 coordinates substrate.

Belongs to the ribose 5-phosphate isomerase family. As to quaternary structure, homodimer.

It catalyses the reaction aldehydo-D-ribose 5-phosphate = D-ribulose 5-phosphate. Its pathway is carbohydrate degradation; pentose phosphate pathway; D-ribose 5-phosphate from D-ribulose 5-phosphate (non-oxidative stage): step 1/1. Catalyzes the reversible conversion of ribose-5-phosphate to ribulose 5-phosphate. The sequence is that of Ribose-5-phosphate isomerase A from Streptococcus pyogenes serotype M5 (strain Manfredo).